Reading from the N-terminus, the 297-residue chain is tRNA (guanine-N(7)-)-methyltransferase (297 aa).

Positions 22, 47, 74, and 97 each coordinate S-adenosyl-L-methionine. Aspartate 97 is a catalytic residue. Residues lysine 101, aspartate 133, and 165-168 (TKYE) contribute to the substrate site.

It belongs to the class I-like SAM-binding methyltransferase superfamily. TrmB family.

It carries out the reaction guanosine(46) in tRNA + S-adenosyl-L-methionine = N(7)-methylguanosine(46) in tRNA + S-adenosyl-L-homocysteine. It participates in tRNA modification; N(7)-methylguanine-tRNA biosynthesis. Its function is as follows. Catalyzes the formation of N(7)-methylguanine at position 46 (m7G46) in tRNA. In Aquifex aeolicus (strain VF5), this protein is tRNA (guanine-N(7)-)-methyltransferase.